The chain runs to 452 residues: MKVISNFQNKKILILGLAKSGEAAAKLLTKLGALVTVNDSKPFDQNPAAQALLEEGIKVICGSHPVELLDENFEYMVKNPGIPYDNPMVKRALAKEIPILTEVELAYFVSEAPIIGITGSNGKTTTTTMIADVLNAGGQSALLSGNIGYPASKVVQKAIAGDTLVMELSSFQLVGVNAFRPHIAVITNLMPTHLDYHGSFEDYVAAKWMIQAQMTESDYLILNANQEISATLAKTTKATVIPFSTQKVVDGAYLNDGILYFKEQAIIAATDLGVPGSHNIENALATIAVAKLSGIADDIIAQCLSHFGGVKHRLQRVGQIKDITFYNDSKSTNILATQKALSGFDNSRLILIAGGLDRGNEFDDLVPDLLGLKQMIILGESAERMKRAANKAEVSYLEARNVAEATELAFKLAQTGDTILLSPANASWDMYPNFEVRGDEFLATFDCLRGDA.

Residue 119–125 (GSNGKTT) coordinates ATP.

The protein belongs to the MurCDEF family.

Its subcellular location is the cytoplasm. The enzyme catalyses UDP-N-acetyl-alpha-D-muramoyl-L-alanine + D-glutamate + ATP = UDP-N-acetyl-alpha-D-muramoyl-L-alanyl-D-glutamate + ADP + phosphate + H(+). It functions in the pathway cell wall biogenesis; peptidoglycan biosynthesis. Its function is as follows. Cell wall formation. Catalyzes the addition of glutamate to the nucleotide precursor UDP-N-acetylmuramoyl-L-alanine (UMA). This is UDP-N-acetylmuramoylalanine--D-glutamate ligase from Streptococcus pyogenes serotype M6 (strain ATCC BAA-946 / MGAS10394).